The chain runs to 387 residues: Protein phosphatase 2C 50 (387 aa).

A PPM-type phosphatase domain is found at 60–377 (VWGCASTRGR…DNITVIVVDL (318 aa)). Mn(2+) contacts are provided by Asp-118 and Gly-119. The Modulates binding affinity to PYR/PYL/RCAR abscisic acid intracellular receptors signature appears at 264-268 (VSGIL). The Mn(2+) site is built by Asp-306 and Asp-368.

The protein belongs to the PP2C family. In terms of assembly, interacts with PYL3, PYL5, PYL9 and PYL10. Binding to PYL3, PYL5, PYL9 and PYL10 is dependent on the presence of abscisic acid (ABA). Interacts with SAPK10. Mg(2+) is required as a cofactor. Requires Mn(2+) as cofactor.

It carries out the reaction O-phospho-L-seryl-[protein] + H2O = L-seryl-[protein] + phosphate. The enzyme catalyses O-phospho-L-threonyl-[protein] + H2O = L-threonyl-[protein] + phosphate. In terms of biological role, protein phosphatase involved in abscisic acid (ABA) signaling. Together with PYL3 and SAPK10, may form an ABA signaling module involved in stress response. This is Protein phosphatase 2C 50 from Oryza sativa subsp. japonica (Rice).